Here is a 471-residue protein sequence, read N- to C-terminus: (13S,14R)-1,13-dihydroxy-N-methylcanadine 13-O-acetyltransferase AT1 (471 aa).

It belongs to the plant acyltransferase family.

The enzyme catalyses (13S,14R)-1,13-dihydroxy-N-methylcanadine + acetyl-CoA = (13S,14R)-13-O-acetyl-1-hydroxy-N-methylcanadine + CoA. The protein operates within alkaloid biosynthesis. Functionally, acetyltransferase involved in the biosynthesis of the benzylisoquinoline alkaloid noscapine. Converts (13S,14R)-1,13-dihydroxy-N-methylcanadine to (13S,14R)-13-O-acetyl-1-hydroxy-N-methylcanadine. This Papaver somniferum (Opium poppy) protein is (13S,14R)-1,13-dihydroxy-N-methylcanadine 13-O-acetyltransferase AT1.